Here is a 376-residue protein sequence, read N- to C-terminus: MEGEEKPAQEADVEPVVTAGTSEAVPRVLAGDPQNISDVDAFNLLLEMKLKRRRERPNLPRTVTQLVAEDGSRVYVVGTAHFSDDSKRDVVKTIREVQPDVVVVELCQYRVSMLKMDERTLLREAKEVSLEKLQQAVRQNGLMSGLMQMLLLKVSAHITEQLGMAPGGEFREAFKEASKVPFCKFHLGDRPIPVTFKRAIAALSFWQKVKLAWGLCFLSDPISKDDVERCKQKDLLEQMMAEMIGEFPDLHRTIVSERDVYLTYMLRQAARRLELPRASDAEPRKCVPSVVVGVVGMGHVPGIEKNWSTDLNIQEIMTVPPPSISGRVSRVAVKAAFFGLLGYSLYWMGRRTLNLVLSLPAAQFCLQRVSEARPGR.

The residue at position 1 (Met1) is an N-acetylmethionine. At Thr64 the chain carries Phosphothreonine.

The chain is TraB domain-containing protein (Trabd) from Mus musculus (Mouse).